A 369-amino-acid polypeptide reads, in one-letter code: Histidinol-phosphate aminotransferase (369 aa).

K223 is modified (N6-(pyridoxal phosphate)lysine).

The protein belongs to the class-II pyridoxal-phosphate-dependent aminotransferase family. Histidinol-phosphate aminotransferase subfamily. In terms of assembly, homodimer. Requires pyridoxal 5'-phosphate as cofactor.

It carries out the reaction L-histidinol phosphate + 2-oxoglutarate = 3-(imidazol-4-yl)-2-oxopropyl phosphate + L-glutamate. Its pathway is amino-acid biosynthesis; L-histidine biosynthesis; L-histidine from 5-phospho-alpha-D-ribose 1-diphosphate: step 7/9. Functionally, catalyzes the conversion of imidazole acetol phosphate to histidinol phosphate. Can also transaminate aromatic amino acids and histidine in addition to histidinol phosphate. The chain is Histidinol-phosphate aminotransferase from Zymomonas mobilis subsp. mobilis (strain ATCC 31821 / ZM4 / CP4).